A 956-amino-acid polypeptide reads, in one-letter code: Bromodomain testis-specific protein (956 aa).

A Bromo 1 domain is found at 26–132 (RLTNQLQFLQ…KLFMQKLSQM (107 aa)). Ser-186 carries the post-translational modification Phosphoserine. The Nuclear localization signal signature appears at 208–219 (KGVKRRADTTTP). The segment at 210–239 (VKRRADTTTPTTSIAKASSESPPTLRETKP) is disordered. The span at 216–231 (TTTPTTSIAKASSESP) shows a compositional bias: polar residues. The 110-residue stretch at 266–375 (VKVTEQLKHC…DVFELHFAKI (110 aa)) folds into the Bromo 2 domain. Disordered regions lie at residues 391–420 (NSAQALSRESSSEASSGDASSEDSEDERVQ), 442–508 (VPLR…PMNY), 607–747 (NQLN…HSQQ), and 859–934 (LEHN…RREA). Residues 392–409 (SAQALSRESSSEASSGDA) show a composition bias toward low complexity. A coiled-coil region spans residues 417-442 (ERVQHLAKLQEQLNAVHQQLQVLSQV). A compositionally biased stretch (basic residues) spans 445–463 (RKLKKKNEKSKRAPKRKKV). The 83-residue stretch at 496 to 578 (KSEEEDNAKP…ACLRKRSLKP (83 aa)) folds into the NET domain. Positions 625–640 (PPPPPPPPPPPPPPPE) are enriched in pro residues. Positions 649–688 (DSSSSSGSGSGSSSSSSGSSSSSSSSGSASSSSDSSSSDS) are enriched in low complexity. Polar residues predominate over residues 714-724 (KQIQSSVQDIT). Residues 844 to 940 (EKEVKARTQE…RREAMAGTID (97 aa)) are a coiled coil. 2 stretches are compositionally biased toward basic and acidic residues: residues 859–874 (LEHNAKDPKVSQENQR) and 915–934 (LLKDRNLAREKEQERRRREA).

It belongs to the BET family. In terms of assembly, interacts with SMARCE1. Interacts with mRNA splicing machinery proteins SRSF2, DDX5, HNRNPK and TARDBP. Interacts with the acetylated N-terminus of histone H1, H2, H3 and H4. Interacts with P-TEFb components CDK9 and CCNT1/cyclin-T1. Post-translationally, ubiquitinated in a SPOP-dependent manner, leading to proteasomal degradation. In terms of tissue distribution, testis-specific. Expressed in germinal cells from the early meiotic (pachytene) spermatocytes and during spermiogenesis in the round and elongating spermatids until the condensed late spermatids. No expression seen in spermatogonia.

The protein resides in the nucleus. Functionally, testis-specific chromatin protein that specifically binds histone H4 acetylated at 'Lys-5' and 'Lys-8' (H4K5ac and H4K8ac, respectively) and plays a key role in spermatogenesis. Required in late pachytene spermatocytes: plays a role in meiotic and post-meiotic cells by binding to acetylated histones at the promoter of specific meiotic and post-meiotic genes, facilitating their activation at the appropriate time. In the post-meiotic phase of spermatogenesis, binds to hyperacetylated histones and participates in their general removal from DNA. Also recognizes and binds a subset of butyrylated histones: able to bind histone H4 butyrylated at 'Lys-8' (H4K8ac), while it is not able to bind H4 butyrylated at 'Lys-5' (H4K5ac). Also acts as a component of the splicing machinery in pachytene spermatocytes and round spermatids and participates in 3'-UTR truncation of specific mRNAs in post-meiotic spermatids. Required for chromocenter organization, a structure comprised of peri-centromeric heterochromatin. The polypeptide is Bromodomain testis-specific protein (Brdt) (Mus musculus (Mouse)).